The following is a 1215-amino-acid chain: Homeodomain-interacting protein kinase 3 (1215 aa).

K27 participates in a covalent cross-link: Glycyl lysine isopeptide (Lys-Gly) (interchain with G-Cter in SUMO2). The region spanning 197–525 is the Protein kinase domain; the sequence is YEVLDFLGRG…PAETLNHPFV (329 aa). Residues 203-211 and K226 each bind ATP; that span reads LGRGTFGQV. Catalysis depends on D322, which acts as the Proton acceptor. The residue at position 359 (Y359) is a Phosphotyrosine. Residues 767-944 form an interaction with AR region; the sequence is QNRGILVKLM…NSMSDEEQES (178 aa). An interaction with FAS region spans residues 796-891; it reads NTNIPHSAFI…SQRHSLRECK (96 aa). The interval 855 to 1011 is required for localization to nuclear speckles; sequence QTIIIADSPS…ENGLNADEHM (157 aa). The tract at residues 866–918 is SUMO interaction motifs (SIM); required for nuclear localization and kinase activity; the sequence is AVSVITISSDTDEEETSQRHSLRECKGSLDCEACQSTLNIDRMCSLSSPDSTL. Positions 870 to 880 are interaction with UBL1; sequence ITISSDTDEEE. Over residues 912-929 the composition is skewed to low complexity; the sequence is SSPDSTLSTSSSGQSSPS. A disordered region spans residues 912 to 987; the sequence is SSPDSTLSTS…ELVSSADTET (76 aa). The span at 945–957 shows a compositional bias: polar residues; it reads SCDTVDGSPTSDS. K1208 participates in a covalent cross-link: Glycyl lysine isopeptide (Lys-Gly) (interchain with G-Cter in SUMO).

The protein belongs to the protein kinase superfamily. CMGC Ser/Thr protein kinase family. HIPK subfamily. As to quaternary structure, interacts with Nkx1-2. Interacts with FAS and DAXX. Probably part of a complex consisting of HIPK3, FAS and FADD. Interacts with and stabilizes ligand-bound androgen receptor (AR). Interacts with UBL1/SUMO-1. Binds to NR5A1/SF1, SPEN/MINT and RUNX2. Autophosphorylated, but autophosphorylation is not required for catalytic activity. Post-translationally, may be sumoylated. As to expression, overexpressed in multidrug resistant cells. Highly expressed in heart and skeletal muscle, and at lower levels in placenta, pancreas, brain, spleen, prostate, thymus, testis, small intestine, colon and leukocytes. Not found in liver and lung.

Its subcellular location is the cytoplasm. The protein resides in the nucleus. The catalysed reaction is L-seryl-[protein] + ATP = O-phospho-L-seryl-[protein] + ADP + H(+). It catalyses the reaction L-threonyl-[protein] + ATP = O-phospho-L-threonyl-[protein] + ADP + H(+). Its function is as follows. Serine/threonine-protein kinase involved in transcription regulation, apoptosis and steroidogenic gene expression. Phosphorylates JUN and RUNX2. Seems to negatively regulate apoptosis by promoting FADD phosphorylation. Enhances androgen receptor-mediated transcription. May act as a transcriptional corepressor for NK homeodomain transcription factors. The phosphorylation of NR5A1 activates SF1 leading to increased steroidogenic gene expression upon cAMP signaling pathway stimulation. In osteoblasts, supports transcription activation: phosphorylates RUNX2 that synergizes with SPEN/MINT to enhance FGFR2-mediated activation of the osteocalcin FGF-responsive element (OCFRE). This is Homeodomain-interacting protein kinase 3 (HIPK3) from Homo sapiens (Human).